Here is a 162-residue protein sequence, read N- to C-terminus: Peptidyl-prolyl cis-trans isomerase-like 1 (162 aa).

The PPIase cyclophilin-type domain maps to 1–155 (MATDVTFDTS…DEVKILRAKV (155 aa)).

It belongs to the cyclophilin-type PPIase family. PPIL1 subfamily.

The catalysed reaction is [protein]-peptidylproline (omega=180) = [protein]-peptidylproline (omega=0). PPIases accelerate the folding of proteins. It catalyzes the cis-trans isomerization of proline imidic peptide bonds in oligopeptides. The polypeptide is Peptidyl-prolyl cis-trans isomerase-like 1 (cyp1) (Emericella nidulans (strain FGSC A4 / ATCC 38163 / CBS 112.46 / NRRL 194 / M139) (Aspergillus nidulans)).